Here is a 95-residue protein sequence, read N- to C-terminus: Aspartyl/glutamyl-tRNA(Asn/Gln) amidotransferase subunit C (95 aa).

It belongs to the GatC family. In terms of assembly, heterotrimer of A, B and C subunits.

It catalyses the reaction L-glutamyl-tRNA(Gln) + L-glutamine + ATP + H2O = L-glutaminyl-tRNA(Gln) + L-glutamate + ADP + phosphate + H(+). The enzyme catalyses L-aspartyl-tRNA(Asn) + L-glutamine + ATP + H2O = L-asparaginyl-tRNA(Asn) + L-glutamate + ADP + phosphate + 2 H(+). Its function is as follows. Allows the formation of correctly charged Asn-tRNA(Asn) or Gln-tRNA(Gln) through the transamidation of misacylated Asp-tRNA(Asn) or Glu-tRNA(Gln) in organisms which lack either or both of asparaginyl-tRNA or glutaminyl-tRNA synthetases. The reaction takes place in the presence of glutamine and ATP through an activated phospho-Asp-tRNA(Asn) or phospho-Glu-tRNA(Gln). This chain is Aspartyl/glutamyl-tRNA(Asn/Gln) amidotransferase subunit C, found in Pseudomonas putida (strain ATCC 700007 / DSM 6899 / JCM 31910 / BCRC 17059 / LMG 24140 / F1).